Reading from the N-terminus, the 387-residue chain is Protein RecA (387 aa).

Position 78 to 85 (78 to 85) interacts with ATP; it reads GPESSGKT. Residues 350–369 show a composition bias toward basic and acidic residues; the sequence is QTREVKSIERDPKETKETKS. Residues 350–387 form a disordered region; sequence QTREVKSIERDPKETKETKSKQPVSFSTEAEVDIAVGE.

This sequence belongs to the RecA family.

The protein localises to the cytoplasm. Functionally, can catalyze the hydrolysis of ATP in the presence of single-stranded DNA, the ATP-dependent uptake of single-stranded DNA by duplex DNA, and the ATP-dependent hybridization of homologous single-stranded DNAs. It interacts with LexA causing its activation and leading to its autocatalytic cleavage. This Leptospira meyeri protein is Protein RecA.